The following is a 757-amino-acid chain: UDP-N-acetylmuramoyl-L-alanyl-D-glutamate--2,6-diaminopimelate ligase MurE homolog, chloroplastic (757 aa).

Positions 1–11 are enriched in low complexity; the sequence is MATAPLAFHLP. Residues 1–53 constitute a chloroplast transit peptide; the sequence is MATAPLAFHLPFPFPSASRPPPRLLPPSRRPPAARLAATRRFRPPTADDEPPE. Disordered regions lie at residues 1–112, 126–152, and 172–195; these read MATA…DEFF, FTRR…ADEL, and VSLA…GDDG. Residues 12 to 30 are compositionally biased toward pro residues; sequence FPFPSASRPPPRLLPPSRR. Acidic residues-rich tracts occupy residues 47–56 and 142–152; these read ADDEPPEAAE and PEEEDGLADEL.

Belongs to the MurCDEF family. MurE subfamily. Component of the plastid-encoded plastid RNA polymerase (PEP) complex.

It localises to the plastid. It is found in the chloroplast. Its function is as follows. Required for the activity of the plastid-encoded RNA polymerase (PEP) and full expression of genes transcribed by PEP. This chain is UDP-N-acetylmuramoyl-L-alanyl-D-glutamate--2,6-diaminopimelate ligase MurE homolog, chloroplastic, found in Oryza sativa subsp. japonica (Rice).